The following is a 325-amino-acid chain: ATPase ASNA1 homolog 2 (325 aa).

An ATP-binding site is contributed by 22 to 29 (KGGVGKTT). Residue aspartate 51 is part of the active site. 2 residues coordinate ATP: glutamate 231 and asparagine 258. Zn(2+)-binding residues include cysteine 267 and cysteine 270.

It belongs to the arsA ATPase family. Homodimer.

Its subcellular location is the cytoplasm. It localises to the endoplasmic reticulum. In terms of biological role, ATPase required for the post-translational delivery of tail-anchored (TA) proteins to the endoplasmic reticulum. Recognizes and selectively binds the transmembrane domain of TA proteins in the cytosol. This complex then targets to the endoplasmic reticulum by membrane-bound receptors, where the tail-anchored protein is released for insertion. This process is regulated by ATP binding and hydrolysis. ATP binding drives the homodimer towards the closed dimer state, facilitating recognition of newly synthesized TA membrane proteins. ATP hydrolysis is required for insertion. Subsequently, the homodimer reverts towards the open dimer state, lowering its affinity for the membrane-bound receptor, and returning it to the cytosol to initiate a new round of targeting. The sequence is that of ATPase ASNA1 homolog 2 from Paramecium tetraurelia.